Reading from the N-terminus, the 21-residue chain is Brevinin-1OKb (21 aa).

At Lys21 the chain carries Lysine amide.

As to expression, expressed by the skin glands.

The protein localises to the secreted. Its function is as follows. Antimicrobial peptide. This Nidirana okinavana (Kampira Falls frog) protein is Brevinin-1OKb.